Here is a 402-residue protein sequence, read N- to C-terminus: 4-hydroxy-3-methylbut-2-enyl diphosphate reductase (402 aa).

Cys-66 provides a ligand contact to [4Fe-4S] cluster. His-96 is a binding site for (2E)-4-hydroxy-3-methylbut-2-enyl diphosphate. Dimethylallyl diphosphate is bound at residue His-96. His-96 is an isopentenyl diphosphate binding site. Residue Cys-157 participates in [4Fe-4S] cluster binding. His-185 is a (2E)-4-hydroxy-3-methylbut-2-enyl diphosphate binding site. A dimethylallyl diphosphate-binding site is contributed by His-185. His-185 lines the isopentenyl diphosphate pocket. The Proton donor role is filled by Glu-187. A (2E)-4-hydroxy-3-methylbut-2-enyl diphosphate-binding site is contributed by Thr-250. A [4Fe-4S] cluster-binding site is contributed by Cys-288. 4 residues coordinate (2E)-4-hydroxy-3-methylbut-2-enyl diphosphate: Ser-317, Ser-318, Asn-319, and Ser-379. Ser-317, Ser-318, Asn-319, and Ser-379 together coordinate dimethylallyl diphosphate. Isopentenyl diphosphate contacts are provided by Ser-317, Ser-318, Asn-319, and Ser-379.

This sequence belongs to the IspH family. It depends on [4Fe-4S] cluster as a cofactor.

It carries out the reaction isopentenyl diphosphate + 2 oxidized [2Fe-2S]-[ferredoxin] + H2O = (2E)-4-hydroxy-3-methylbut-2-enyl diphosphate + 2 reduced [2Fe-2S]-[ferredoxin] + 2 H(+). It catalyses the reaction dimethylallyl diphosphate + 2 oxidized [2Fe-2S]-[ferredoxin] + H2O = (2E)-4-hydroxy-3-methylbut-2-enyl diphosphate + 2 reduced [2Fe-2S]-[ferredoxin] + 2 H(+). It functions in the pathway isoprenoid biosynthesis; dimethylallyl diphosphate biosynthesis; dimethylallyl diphosphate from (2E)-4-hydroxy-3-methylbutenyl diphosphate: step 1/1. It participates in isoprenoid biosynthesis; isopentenyl diphosphate biosynthesis via DXP pathway; isopentenyl diphosphate from 1-deoxy-D-xylulose 5-phosphate: step 6/6. Catalyzes the conversion of 1-hydroxy-2-methyl-2-(E)-butenyl 4-diphosphate (HMBPP) into a mixture of isopentenyl diphosphate (IPP) and dimethylallyl diphosphate (DMAPP). Acts in the terminal step of the DOXP/MEP pathway for isoprenoid precursor biosynthesis. The sequence is that of 4-hydroxy-3-methylbut-2-enyl diphosphate reductase from Microcystis aeruginosa (strain NIES-843 / IAM M-2473).